A 332-amino-acid polypeptide reads, in one-letter code: Glycerol-3-phosphate dehydrogenase [NAD(P)+] (332 aa).

Positions 13, 34, and 108 each coordinate NADPH. Sn-glycerol 3-phosphate contacts are provided by K108, G136, and S138. Position 140 (A140) interacts with NADPH. Sn-glycerol 3-phosphate contacts are provided by K191, D244, S254, R255, and N256. K191 serves as the catalytic Proton acceptor. R255 contacts NADPH. The NADPH site is built by V279 and E281.

It belongs to the NAD-dependent glycerol-3-phosphate dehydrogenase family.

The protein resides in the cytoplasm. The enzyme catalyses sn-glycerol 3-phosphate + NAD(+) = dihydroxyacetone phosphate + NADH + H(+). It catalyses the reaction sn-glycerol 3-phosphate + NADP(+) = dihydroxyacetone phosphate + NADPH + H(+). Its pathway is membrane lipid metabolism; glycerophospholipid metabolism. In terms of biological role, catalyzes the reduction of the glycolytic intermediate dihydroxyacetone phosphate (DHAP) to sn-glycerol 3-phosphate (G3P), the key precursor for phospholipid synthesis. The chain is Glycerol-3-phosphate dehydrogenase [NAD(P)+] from Francisella tularensis subsp. mediasiatica (strain FSC147).